The following is a 62-amino-acid chain: Large ribosomal subunit protein uL30 (62 aa).

This sequence belongs to the universal ribosomal protein uL30 family. In terms of assembly, part of the 50S ribosomal subunit.

The protein is Large ribosomal subunit protein uL30 of Nitrosospira multiformis (strain ATCC 25196 / NCIMB 11849 / C 71).